Here is a 348-residue protein sequence, read N- to C-terminus: Uroporphyrinogen decarboxylase (348 aa).

Substrate contacts are provided by residues 28-32 (RQAGR), Asp78, Tyr154, Thr209, and His325.

The protein belongs to the uroporphyrinogen decarboxylase family. As to quaternary structure, homodimer.

The protein localises to the cytoplasm. The enzyme catalyses uroporphyrinogen III + 4 H(+) = coproporphyrinogen III + 4 CO2. The protein operates within porphyrin-containing compound metabolism; protoporphyrin-IX biosynthesis; coproporphyrinogen-III from 5-aminolevulinate: step 4/4. Catalyzes the decarboxylation of four acetate groups of uroporphyrinogen-III to yield coproporphyrinogen-III. The protein is Uroporphyrinogen decarboxylase of Rhodopseudomonas palustris (strain BisA53).